The primary structure comprises 202 residues: Transcriptional regulator GfcR 2 (202 aa).

This sequence belongs to the purine/pyrimidine phosphoribosyltransferase family. GfcR subfamily.

The protein is Transcriptional regulator GfcR 2 of Methanosarcina barkeri (strain Fusaro / DSM 804).